Reading from the N-terminus, the 453-residue chain is Macrophage scavenger receptor types I and II (453 aa).

Residues 1–50 (MAQWDDFPDQQEDTDSCTESVKFDARSVTALLPPHPKNGPTLQERMKSYK) lie on the Cytoplasmic side of the membrane. The residue at position 27 (serine 27) is a Phosphoserine. Residues 51–76 (TALITLYLIVFVVLVPIIGIVAAQLL) traverse the membrane as a helical; Signal-anchor for type II membrane protein segment. The interval 77 to 108 (KWETKNCTVGSVNADISPSPEGKGNGSEDEMR) is spacer. Residues 77-453 (KWETKNCTVG…DEDAGVTCTT (377 aa)) are Extracellular-facing. Residues asparagine 82, asparagine 101, asparagine 142, asparagine 183, asparagine 220, asparagine 248, and asparagine 266 are each glycosylated (N-linked (GlcNAc...) asparagine). Residues 194–255 (ETLNGRVQEN…LNNITNDLRL (62 aa)) adopt a coiled-coil conformation. Disordered regions lie at residues 267–295 (ITLL…PGFP) and 313–349 (PGVR…QRQS). A Collagen-like domain is found at 272 to 343 (GPPGPPGEKG…KGQKGEKGSG (72 aa)). The SRCR domain maps to 352 to 452 (VRLVGGSGPH…HDEDAGVTCT (101 aa)). Intrachain disulfides connect cysteine 377–cysteine 441, cysteine 390–cysteine 451, and cysteine 421–cysteine 431.

Homotrimer. Interacts with MYO18A.

It localises to the membrane. Functionally, membrane glycoproteins implicated in the pathologic deposition of cholesterol in arterial walls during atherogenesis. Two types of receptor subunits exist. These receptors mediate the endocytosis of a diverse group of macromolecules, including modified low density lipoproteins (LDL). The protein is Macrophage scavenger receptor types I and II (MSR1) of Bos taurus (Bovine).